The primary structure comprises 409 residues: Imidazolonepropionase (409 aa).

Fe(3+) contacts are provided by His78 and His80. Residues His78 and His80 each coordinate Zn(2+). The 4-imidazolone-5-propanoate site is built by Arg87, Tyr150, and His183. Tyr150 lines the N-formimidoyl-L-glutamate pocket. His248 serves as a coordination point for Fe(3+). His248 is a Zn(2+) binding site. Gln251 is a 4-imidazolone-5-propanoate binding site. Asp323 provides a ligand contact to Fe(3+). Asp323 lines the Zn(2+) pocket. Residues Asn325 and Gly327 each contribute to the N-formimidoyl-L-glutamate site. Thr328 contacts 4-imidazolone-5-propanoate.

Belongs to the metallo-dependent hydrolases superfamily. HutI family. Zn(2+) is required as a cofactor. Fe(3+) serves as cofactor.

The protein resides in the cytoplasm. It carries out the reaction 4-imidazolone-5-propanoate + H2O = N-formimidoyl-L-glutamate. It functions in the pathway amino-acid degradation; L-histidine degradation into L-glutamate; N-formimidoyl-L-glutamate from L-histidine: step 3/3. In terms of biological role, catalyzes the hydrolytic cleavage of the carbon-nitrogen bond in imidazolone-5-propanoate to yield N-formimidoyl-L-glutamate. It is the third step in the universal histidine degradation pathway. This is Imidazolonepropionase from Mesorhizobium japonicum (strain LMG 29417 / CECT 9101 / MAFF 303099) (Mesorhizobium loti (strain MAFF 303099)).